The sequence spans 380 residues: MASLPVLQKESVFQSGAHAYRIPALLYLPGQQSLLAFAEQRASKKDEHAELIVLRRGDYDAPTHQVQWQAQEVVAQARLDGHRSMNPCPLYDAQTGTLFLFFIAIPGQVTEQQQLQTRANVTRLCQVTSTDHGRTWSSPRDLTDAAIGPAYREWSTFAVGPGHCLQLHDRARSLVVPAYAYRKLHPIQRPIPSAFCFLSHDHGRTWARGHFVAQDTLECQVAEVETGEQRVVTLNARSHLRARVQAQSTNDGLDFQESQLVKKLVEPPPQGCQGSVISFPSPRSGPGSPAQWLLYTHPTHSWQRADLGAYLNPRPPAPEAWSEPVLLAKGSCAYSDLQSMGTGPDGSPLFGCLYEANDYEEIVFLMFTLKQAFPAEYLPQ.

The FRIP motif motif lies at 20-23 (YRIP). Substrate contacts are provided by Arg21 and Arg41. Asp46 serves as the catalytic Proton acceptor. Residues 127-138 (VTSTDHGRTWSS) form a BNR 1 repeat. 2 residues coordinate substrate: Tyr179 and Tyr181. Residues 197–208 (FLSHDHGRTWAR) form a BNR 2 repeat. Residues Glu218, Arg237, and Arg304 each contribute to the substrate site. The Nucleophile role is filled by Tyr334. Glu355 is a catalytic residue.

Belongs to the glycosyl hydrolase 33 family. In terms of tissue distribution, expressed in skeletal muscle, fetal liver and embryonic carcinoma cell line NT2-D1.

It is found in the cytoplasm. Its subcellular location is the cytosol. It catalyses the reaction Hydrolysis of alpha-(2-&gt;3)-, alpha-(2-&gt;6)-, alpha-(2-&gt;8)- glycosidic linkages of terminal sialic acid residues in oligosaccharides, glycoproteins, glycolipids, colominic acid and synthetic substrates.. It carries out the reaction a ganglioside GD1a + H2O = a ganglioside GM1 + N-acetylneuraminate. The catalysed reaction is a ganglioside GM1 + H2O = a ganglioside GA1 + N-acetylneuraminate. The enzyme catalyses a ganglioside GT1b + H2O = a ganglioside GD1b + N-acetylneuraminate. It catalyses the reaction a ganglioside GD1b + H2O = a ganglioside GM1 + N-acetylneuraminate. It carries out the reaction a ganglioside GD3 + H2O = a ganglioside GM3 + N-acetylneuraminate. The catalysed reaction is a ganglioside GM3 + H2O = a beta-D-galactosyl-(1-&gt;4)-beta-D-glucosyl-(1&lt;-&gt;1)-ceramide + N-acetylneuraminate. The enzyme catalyses a ganglioside GM2 + H2O = a ganglioside GA2 + N-acetylneuraminate. It catalyses the reaction a neolactoside IV(3)-alpha-NeuAc-nLc4Cer(d18:1(4E)) + H2O = a neolactoside nLc4Cer(d18:1(4E)) + N-acetylneuraminate. It carries out the reaction N-acetyl-alpha-neuraminosyl-(2-&gt;3)-beta-D-galactosyl-(1-&gt;4)-D-glucose + H2O = lactose + N-acetylneuraminate. Functionally, exo-alpha-sialidase that catalyzes the hydrolytic cleavage of the terminal sialic acid (N-acetylneuraminic acid, Neu5Ac) of a glycan moiety in the catabolism of glycolipids, glycoproteins and oligosacharides. Recognizes sialyl linkage positions of the glycan moiety as well as the supramolecular organization of the sialoglycoconjugate. Displays preference for alpha-(2-&gt;3)-sialylated GD1a and GT1B gangliosides over alpha-(2-&gt;8)-sialylated GD1b, in both monomeric forms and micelles. Hydrolyzes monomeric GM1 ganglioside, but has no activity toward the miscellar form. Has lower sialidase activity for glycoproteins such as fetuin and TF/transferrin that carry a mixture of alpha-(2-&gt;3) and alpha-(2-&gt;6)-sialyl linkages. Cleaves milk oligosaccharide alpha-(2-&gt;3)-sialyllactose, but is inactive toward alpha-(2-&gt;6)-sialyllactose isomer. Has no activity toward colominic acid, a homomer of alpha-(2-&gt;8)-linked Neu5Ac residues. The sequence is that of Sialidase-2 (NEU2) from Homo sapiens (Human).